We begin with the raw amino-acid sequence, 185 residues long: Elongation factor P (185 aa).

This sequence belongs to the elongation factor P family.

The protein localises to the cytoplasm. Its pathway is protein biosynthesis; polypeptide chain elongation. In terms of biological role, involved in peptide bond synthesis. Stimulates efficient translation and peptide-bond synthesis on native or reconstituted 70S ribosomes in vitro. Probably functions indirectly by altering the affinity of the ribosome for aminoacyl-tRNA, thus increasing their reactivity as acceptors for peptidyl transferase. The sequence is that of Elongation factor P from Desulfitobacterium hafniense (strain DSM 10664 / DCB-2).